The following is a 543-amino-acid chain: MAKEIKFGEEARRSLEKGVNQLADTVKVTLGPKGRNVVLDKKFGSPLITNDGVTIAKEVELEDKFENMGAQLVKEVATKTNDVAGDGTTTATLLAQAIIREGMKNVAAGANPMILKKGLQKAVDTAVAGIKENSRKVKGKEDIARVATISANEELIGTLIADAMEKVTNDGVITVEESKTMGTNLEVVEGMQFDRGYLSAYMVTDTDKMEAVLDDPYILITDKKLTNIQDLLPILEEIVKQGKKLLIIAEDIEGEALTTLILNKLRGTFVCVAVKAPGFGDRRKAMLQDIAILTGGEVITEELGLDLKETQITQLGKARQVIVQKENTIIVDGNGSAEDIKSRINSIKTQIEDTTSDFDREKLQERLAKLSGGVAVIQVGAATETEMKEKKLRIEDALAATRAAVEEGIVAGGGTAFINVIPEVAKLLESTSGDEKTGVQIILRALEEPVRQIAENAGLEGSVIVEKIKTSEKGMGFDALNEKYIDMIEGGIVDPAKVTRSALQNAVSVAAMVLTTESVVADKPEPEAPAVPAGMPGGMGGMY.

Residues 29 to 32 (TLGP), 86 to 90 (DGTTT), glycine 413, 478 to 480 (DAL), and aspartate 494 contribute to the ATP site. The disordered stretch occupies residues 524 to 543 (PEPEAPAVPAGMPGGMGGMY).

The protein belongs to the chaperonin (HSP60) family. Forms a cylinder of 14 subunits composed of two heptameric rings stacked back-to-back. Interacts with the co-chaperonin GroES.

The protein resides in the cytoplasm. The enzyme catalyses ATP + H2O + a folded polypeptide = ADP + phosphate + an unfolded polypeptide.. Functionally, together with its co-chaperonin GroES, plays an essential role in assisting protein folding. The GroEL-GroES system forms a nano-cage that allows encapsulation of the non-native substrate proteins and provides a physical environment optimized to promote and accelerate protein folding. The protein is Chaperonin GroEL of Ruminiclostridium cellulolyticum (strain ATCC 35319 / DSM 5812 / JCM 6584 / H10) (Clostridium cellulolyticum).